Reading from the N-terminus, the 437-residue chain is Enolase 1 (437 aa).

A Glycyl lysine isopeptide (Lys-Gly) (interchain with G-Cter in ubiquitin) cross-link involves residue lysine 60. Phosphoserine is present on residues serine 119 and serine 138. Histidine 160 and glutamate 169 together coordinate substrate. Phosphoserine is present on serine 188. Catalysis depends on glutamate 212, which acts as the Proton donor. Lysine 243 participates in a covalent cross-link: Glycyl lysine isopeptide (Lys-Gly) (interchain with G-Cter in ubiquitin). Aspartate 247 and glutamate 296 together coordinate Mg(2+). Residue glutamate 296 coordinates substrate. Threonine 313 is modified (phosphothreonine). Aspartate 321 provides a ligand contact to substrate. Aspartate 321 contacts Mg(2+). Threonine 324 carries the post-translational modification Phosphothreonine. Lysine 346 serves as the catalytic Proton acceptor. Residue lysine 358 forms a Glycyl lysine isopeptide (Lys-Gly) (interchain with G-Cter in ubiquitin) linkage. Residues 373 to 376 (SHRS) and lysine 397 each bind substrate.

This sequence belongs to the enolase family. Homodimer. Mg(2+) is required as a cofactor.

It is found in the cytoplasm. The enzyme catalyses (2R)-2-phosphoglycerate = phosphoenolpyruvate + H2O. Its pathway is carbohydrate degradation; glycolysis; pyruvate from D-glyceraldehyde 3-phosphate: step 4/5. This Saccharomyces cerevisiae (strain ATCC 204508 / S288c) (Baker's yeast) protein is Enolase 1 (ENO1).